The chain runs to 149 residues: Alpha-crystallin A chain (149 aa).

The region spanning leucine 41–proline 149 is the sHSP domain. 4 residues coordinate Zn(2+): histidine 89, glutamate 91, histidine 96, and histidine 143.

The protein belongs to the small heat shock protein (HSP20) family. Heteropolymer composed of three CRYAA and one CRYAB subunits. Inter-subunit bridging via zinc ions enhances stability, which is crucial as there is no protein turn over in the lens. Can also form homodimers and homotetramers (dimers of dimers) which serve as the building blocks of homooligomers. Within homooligomers, the zinc-binding motif is created from residues of 3 different molecules. His-89 and Glu-91 from one molecule are ligands of the zinc ion, and His-96 and His-143 residues from additional molecules complete the site with tetrahedral coordination geometry.

The protein localises to the cytoplasm. It is found in the nucleus. Contributes to the transparency and refractive index of the lens. May act as a chaperone, preventing aggregation of various proteins under a wide range of stress conditions. This chain is Alpha-crystallin A chain (CRYAA), found in Eudromia elegans (Elegant crested-tinamou).